A 93-amino-acid chain; its full sequence is Large ribosomal subunit protein bL27 (93 aa).

Positions Met1–Phe8 are excised as a propeptide. Positions Phe8–Gly29 are disordered.

The protein belongs to the bacterial ribosomal protein bL27 family. The N-terminus is cleaved by ribosomal processing cysteine protease Prp.

This is Large ribosomal subunit protein bL27 from Limosilactobacillus fermentum (strain NBRC 3956 / LMG 18251) (Lactobacillus fermentum).